The sequence spans 145 residues: D-aminoacyl-tRNA deacylase (145 aa).

Positions 137 to 138 (GP) match the Gly-cisPro motif, important for rejection of L-amino acids motif.

The protein belongs to the DTD family. Homodimer.

It localises to the cytoplasm. The enzyme catalyses glycyl-tRNA(Ala) + H2O = tRNA(Ala) + glycine + H(+). It catalyses the reaction a D-aminoacyl-tRNA + H2O = a tRNA + a D-alpha-amino acid + H(+). Its function is as follows. An aminoacyl-tRNA editing enzyme that deacylates mischarged D-aminoacyl-tRNAs. Also deacylates mischarged glycyl-tRNA(Ala), protecting cells against glycine mischarging by AlaRS. Acts via tRNA-based rather than protein-based catalysis; rejects L-amino acids rather than detecting D-amino acids in the active site. By recycling D-aminoacyl-tRNA to D-amino acids and free tRNA molecules, this enzyme counteracts the toxicity associated with the formation of D-aminoacyl-tRNA entities in vivo and helps enforce protein L-homochirality. The chain is D-aminoacyl-tRNA deacylase from Sodalis glossinidius (strain morsitans).